A 90-amino-acid polypeptide reads, in one-letter code: Small ribosomal subunit protein uS17 (90 aa).

It belongs to the universal ribosomal protein uS17 family. As to quaternary structure, part of the 30S ribosomal subunit.

Functionally, one of the primary rRNA binding proteins, it binds specifically to the 5'-end of 16S ribosomal RNA. This chain is Small ribosomal subunit protein uS17, found in Paraburkholderia phytofirmans (strain DSM 17436 / LMG 22146 / PsJN) (Burkholderia phytofirmans).